The primary structure comprises 340 residues: Ferredoxin--NADP reductase (340 aa).

Positions 33, 41, 46, 86, 120, 286, and 327 each coordinate FAD.

It belongs to the ferredoxin--NADP reductase type 2 family. As to quaternary structure, homodimer. FAD serves as cofactor.

It catalyses the reaction 2 reduced [2Fe-2S]-[ferredoxin] + NADP(+) + H(+) = 2 oxidized [2Fe-2S]-[ferredoxin] + NADPH. The sequence is that of Ferredoxin--NADP reductase from Rickettsia conorii (strain ATCC VR-613 / Malish 7).